Here is a 220-residue protein sequence, read N- to C-terminus: Adenylate kinase (220 aa).

10–15 (GAGKGT) lines the ATP pocket. Residues 30-59 (STGDLFRANISQQTELGKLAKSYMDEGNLV) are NMP. Residues Thr-31, Arg-36, 57-59 (NLV), 85-88 (GFPR), and Gln-92 contribute to the AMP site. Residues 126–164 (GRRICRNDSAHVFHVSYKPPKQEGVCDVCGGELYQRDDD) are LID. Residues Arg-127 and 137–138 (VF) contribute to the ATP site. AMP contacts are provided by Arg-161 and Arg-172. Gly-200 provides a ligand contact to ATP.

Belongs to the adenylate kinase family. In terms of assembly, monomer.

The protein localises to the cytoplasm. The enzyme catalyses AMP + ATP = 2 ADP. It functions in the pathway purine metabolism; AMP biosynthesis via salvage pathway; AMP from ADP: step 1/1. In terms of biological role, catalyzes the reversible transfer of the terminal phosphate group between ATP and AMP. Plays an important role in cellular energy homeostasis and in adenine nucleotide metabolism. The sequence is that of Adenylate kinase from Streptomyces avermitilis (strain ATCC 31267 / DSM 46492 / JCM 5070 / NBRC 14893 / NCIMB 12804 / NRRL 8165 / MA-4680).